Reading from the N-terminus, the 458-residue chain is Vacuolar basic amino acid transporter 3 (458 aa).

Residues 1–9 (MNMLIVGRV) lie on the Cytoplasmic side of the membrane. The helical transmembrane segment at 10–30 (VASVGGSGLQTLCFVIGCTMV) threads the bilayer. At 31-36 (GERSRP) the chain is on the vacuolar side. Residues 37-57 (LVISILSCAFAVAAIVGPIIG) traverse the membrane as a helical segment. The Cytoplasmic segment spans residues 58–67 (GAFTTHVTWR). Residues 68–88 (WCFYINLPIGGLAIIMFLLTY) form a helical membrane-spanning segment. Residues 89–132 (KAENKGILQQIKDAIGTISSFTFSKFRHQVNFKRLMNGIIFKFD) are Vacuolar-facing. The chain crosses the membrane as a helical span at residues 133–153 (FFGFALCSAGLVLFLLGLTFG). Topologically, residues 154-163 (GNKYSWNSGQ) are cytoplasmic. A helical membrane pass occupies residues 164–184 (VIAYLVLGVLLFIFSLVYDFF). Topologically, residues 185–205 (LFDKFNPEPDNISYRPLLLRR) are vacuolar. Asparagine 195 is a glycosylation site (N-linked (GlcNAc...) asparagine). The chain crosses the membrane as a helical span at residues 206 to 226 (LVAKPAIIIINMVTFLLCTGY). The Cytoplasmic portion of the chain corresponds to 227 to 248 (NGQMIYSVQFFQLIFASSAWKA). The helical transmembrane segment at 249 to 269 (GLHLIPIVITNVIAAIASGVI) threads the bilayer. At 270–277 (TKKLGLVK) the chain is on the vacuolar side. The helical transmembrane segment at 278–298 (PLLIFGGVLGVIGAGLMTLMT) threads the bilayer. Topologically, residues 299-306 (NTSTKSTQ) are cytoplasmic. A helical transmembrane segment spans residues 307–327 (IGVLLLPGFSLGFALQASLMS). The Vacuolar segment spans residues 328–415 (AQLQITKDRP…STIGNILSDS (88 aa)). The chain crosses the membrane as a helical span at residues 416–436 (IKNVFWMDLGFYALGFLFCSF). Residues 437-458 (SSNKKLIIPKKDETPEDNLEDK) lie on the Cytoplasmic side of the membrane.

Belongs to the major facilitator superfamily.

It is found in the vacuole membrane. Functionally, transporter required for vacuolar uptake of histidine and lysine. The chain is Vacuolar basic amino acid transporter 3 (VBA3) from Saccharomyces cerevisiae (strain ATCC 204508 / S288c) (Baker's yeast).